A 130-amino-acid polypeptide reads, in one-letter code: MDTMDTMGRHVIAELWDCDFDKLNDMPYIEQLFVDAALRAGAEVREVAFHKFAPQGVSGVVIISESHLTIHSFPEHGYASIDVYTCGDRIDPNVAAEYIAEGLNAKTRESIELPRGTGSFEIKQRETKAL.

Residue serine 66 is the Schiff-base intermediate with substrate; via pyruvic acid of the active site. Residue serine 66 is modified to Pyruvic acid (Ser); by autocatalysis. The active-site Proton acceptor; for processing activity is histidine 71. The active-site Proton donor; for catalytic activity is cysteine 86.

Belongs to the prokaryotic AdoMetDC family. Type 1 subfamily. Heterotetramer of two alpha and two beta chains arranged as a dimer of alpha/beta heterodimers. Requires pyruvate as cofactor. In terms of processing, is synthesized initially as an inactive proenzyme. Formation of the active enzyme involves a self-maturation process in which the active site pyruvoyl group is generated from an internal serine residue via an autocatalytic post-translational modification. Two non-identical subunits are generated from the proenzyme in this reaction, and the pyruvate is formed at the N-terminus of the alpha chain, which is derived from the carboxyl end of the proenzyme. The post-translation cleavage follows an unusual pathway, termed non-hydrolytic serinolysis, in which the side chain hydroxyl group of the serine supplies its oxygen atom to form the C-terminus of the beta chain, while the remainder of the serine residue undergoes an oxidative deamination to produce ammonia and the pyruvoyl group blocking the N-terminus of the alpha chain.

It catalyses the reaction S-adenosyl-L-methionine + H(+) = S-adenosyl 3-(methylsulfanyl)propylamine + CO2. Its pathway is amine and polyamine biosynthesis; S-adenosylmethioninamine biosynthesis; S-adenosylmethioninamine from S-adenosyl-L-methionine: step 1/1. Catalyzes the decarboxylation of S-adenosylmethionine to S-adenosylmethioninamine (dcAdoMet), the propylamine donor required for the synthesis of the polyamines spermine and spermidine from the diamine putrescine. The protein is S-adenosylmethionine decarboxylase proenzyme of Bacillus cereus (strain ATCC 10987 / NRS 248).